A 267-amino-acid polypeptide reads, in one-letter code: Zinc finger protein ZAT1 (267 aa).

The segment at 5–27 adopts a C2H2-type 1 zinc-finger fold; it reads HKCKLCWKSFANGRALGGHMRSH. 2 disordered regions span residues 34 to 99 and 181 to 204; these read PSQP…ADIK and SHKKKIAETDQLGSDELKKKKKKS. Residues 52–62 show a composition bias toward basic and acidic residues; it reads QDRESETESSK. Residues 63–73 show a composition bias toward basic residues; that stretch reads KPSRKRSRLNR. Residues 83–97 show a composition bias toward basic and acidic residues; the sequence is QSNEEGKSETARAAD. C2H2-type zinc fingers lie at residues 160 to 182 and 209 to 231; these read FECETCEKVFKSYQALGGHRASH and HECPICAKVFTSGQALGGHKRSH.

The protein localises to the nucleus. Its function is as follows. Probable transcription factor that may be involved in stress responses. The polypeptide is Zinc finger protein ZAT1 (ZAT1) (Arabidopsis thaliana (Mouse-ear cress)).